A 331-amino-acid chain; its full sequence is Malate dehydrogenase (331 aa).

14 to 20 (GAAGSIG) provides a ligand contact to NAD(+). Arg-95 and Arg-101 together coordinate substrate. NAD(+) contacts are provided by residues Asn-108, Gln-115, and 132 to 134 (VGN). Positions 134 and 165 each coordinate substrate. The Proton acceptor role is filled by His-190.

This sequence belongs to the LDH/MDH superfamily. MDH type 2 family.

The enzyme catalyses (S)-malate + NAD(+) = oxaloacetate + NADH + H(+). In terms of biological role, catalyzes the reversible oxidation of malate to oxaloacetate. In Rhodococcus jostii (strain RHA1), this protein is Malate dehydrogenase.